The primary structure comprises 328 residues: Ornithine transcarbamylase, mitochondrial (328 aa).

Residues 1–6 (GGQPLQ) constitute a mitochondrion transit peptide. An N6-acetyllysine; alternate modification is found at K44. N6-succinyllysine; alternate is present on K44. N6-succinyllysine is present on K54. K62 carries the N6-acetyllysine; alternate modification. The residue at position 62 (K62) is an N6-succinyllysine; alternate. 64 to 68 (STRTR) is a carbamoyl phosphate binding site. The residue at position 107 (S107) is a Phosphoserine. R115 provides a ligand contact to carbamoyl phosphate. Residue R115 participates in L-ornithine binding. An N6-acetyllysine; alternate modification is found at K118. K118 is subject to N6-succinyllysine; alternate. Residue H142 coordinates carbamoyl phosphate. N173 provides a ligand contact to L-ornithine. K195, K205, and K212 each carry N6-acetyllysine; alternate. N6-succinyllysine; alternate occurs at positions 195, 205, and 212. 237-241 (DTWIS) provides a ligand contact to L-ornithine. K248 and K263 each carry N6-succinyllysine. 276–279 (HCLP) contributes to the L-ornithine binding site. C277 is a catalytic residue. K281 bears the N6-acetyllysine; alternate mark. The residue at position 281 (K281) is an N6-succinyllysine; alternate. R304 contacts carbamoyl phosphate. Position 304 (R304) interacts with L-ornithine.

The protein belongs to the aspartate/ornithine carbamoyltransferase superfamily. OTCase family. As to quaternary structure, homotrimer. In terms of processing, acetylation at Lys-62 negatively regulates ornithine carbamoyltransferase activity in response to nutrient signals.

The protein localises to the mitochondrion matrix. The catalysed reaction is carbamoyl phosphate + L-ornithine = L-citrulline + phosphate + H(+). It functions in the pathway nitrogen metabolism; urea cycle; L-citrulline from L-ornithine and carbamoyl phosphate: step 1/1. With respect to regulation, negatively regulated by lysine acetylation. Its function is as follows. Catalyzes the second step of the urea cycle, the condensation of carbamoyl phosphate with L-ornithine to form L-citrulline. The urea cycle ensures the detoxification of ammonia by converting it to urea for excretion. The sequence is that of Ornithine transcarbamylase, mitochondrial from Sus scrofa (Pig).